The following is a 1305-amino-acid chain: DNA-directed DNA polymerase (1305 aa).

The protein belongs to the DNA polymerase type-C family.

The enzyme catalyses DNA(n) + a 2'-deoxyribonucleoside 5'-triphosphate = DNA(n+1) + diphosphate. Replicates viral genomic DNA. The protein is DNA-directed DNA polymerase of Bacillus pumilus (Bacillus mesentericus).